A 561-amino-acid chain; its full sequence is Phosphoinositide phospholipase C 1 (561 aa).

The region spanning 21-54 (EPPEEIKNLFHDYSQDDRMSADEMLRFVIQVQGE) is the EF-hand domain. The PI-PLC X-box domain maps to 105-249 (QDMNQPLSHY…LKNKILISTK (145 aa)). Residues His120 and His166 contribute to the active site. Residues 256–266 (QTQISKGSTTD) are compositionally biased toward polar residues. Residues 256–285 (QTQISKGSTTDESTRAKKISDAEEQVQEED) are disordered. Residues 267-276 (ESTRAKKISD) show a composition bias toward basic and acidic residues. The PI-PLC Y-box domain maps to 294–410 (RDLISIHAGN…GYVKKPDVLL (117 aa)). Positions 414 to 541 (PEGEIFDPCS…PGIRAVRLHD (128 aa)) constitute a C2 domain. Ca(2+)-binding residues include Asp452, Asp458, Asp510, Asp512, and Asp518.

The cofactor is Ca(2+). Expressed in stems, leaves, roots, flowers and siliques. Predominant in the vascular tissues of roots and leaves.

It localises to the cell membrane. It catalyses the reaction a 1,2-diacyl-sn-glycero-3-phospho-(1D-myo-inositol-4,5-bisphosphate) + H2O = 1D-myo-inositol 1,4,5-trisphosphate + a 1,2-diacyl-sn-glycerol + H(+). In terms of biological role, the production of the second messenger molecules diacylglycerol (DAG) and inositol 1,4,5-trisphosphate (IP3) is mediated by activated phosphatidylinositol-specific phospholipase C enzymes. Required for secondary responses to abscisic acid signals. The protein is Phosphoinositide phospholipase C 1 (PLC1) of Arabidopsis thaliana (Mouse-ear cress).